The chain runs to 103 residues: Cystatin-A8 (103 aa).

Residues 1–20 form a disordered region; sequence MESEEMLAGGLTEPRPATPE. Residues 51-55 carry the Secondary area of contact motif; it reads QVVAG.

The protein belongs to the cystatin family.

It localises to the cytoplasm. This is an intracellular thiol proteinase inhibitor. The sequence is that of Cystatin-A8 from Sus scrofa (Pig).